The chain runs to 870 residues: Leucine--tRNA ligase (870 aa).

Residues 43 to 53 (PYPSGRLHMGH) carry the 'HIGH' region motif. A 'KMSKS' region motif is present at residues 626–630 (KMSKS). Residue Lys629 coordinates ATP.

The protein belongs to the class-I aminoacyl-tRNA synthetase family.

Its subcellular location is the cytoplasm. The catalysed reaction is tRNA(Leu) + L-leucine + ATP = L-leucyl-tRNA(Leu) + AMP + diphosphate. The chain is Leucine--tRNA ligase from Pseudoalteromonas atlantica (strain T6c / ATCC BAA-1087).